Here is a 399-residue protein sequence, read N- to C-terminus: DNA primase DnaG (399 aa).

The region spanning 182–268 (DAIIVVEGRA…EVEDLTQKEI (87 aa)) is the Toprim domain. Residues glutamate 188, aspartate 230, and aspartate 232 each coordinate Mg(2+).

This sequence belongs to the archaeal DnaG primase family. In terms of assembly, forms a ternary complex with MCM helicase and DNA. Component of the archaeal exosome complex. Mg(2+) is required as a cofactor.

It carries out the reaction ssDNA + n NTP = ssDNA/pppN(pN)n-1 hybrid + (n-1) diphosphate.. Functionally, RNA polymerase that catalyzes the synthesis of short RNA molecules used as primers for DNA polymerase during DNA replication. Also part of the exosome, which is a complex involved in RNA degradation. Acts as a poly(A)-binding protein that enhances the interaction between heteromeric, adenine-rich transcripts and the exosome. This Archaeoglobus fulgidus (strain ATCC 49558 / DSM 4304 / JCM 9628 / NBRC 100126 / VC-16) protein is DNA primase DnaG.